Here is a 351-residue protein sequence, read N- to C-terminus: DNA polymerase IV (351 aa).

The UmuC domain maps to Ile3–Gly187. Mg(2+) contacts are provided by Asp7 and Asp105. The active site involves Glu106.

This sequence belongs to the DNA polymerase type-Y family. Mg(2+) serves as cofactor.

The catalysed reaction is DNA(n) + a 2'-deoxyribonucleoside 5'-triphosphate = DNA(n+1) + diphosphate. Its function is as follows. Poorly processive, error-prone DNA polymerase involved in untargeted mutagenesis. Copies undamaged DNA at stalled replication forks, which arise in vivo from mismatched or misaligned primer ends. These misaligned primers can be extended by PolIV. Exhibits no 3'-5' exonuclease (proofreading) activity. May be involved in translesional synthesis. The chain is DNA polymerase IV from Sulfurisphaera tokodaii (strain DSM 16993 / JCM 10545 / NBRC 100140 / 7) (Sulfolobus tokodaii).